We begin with the raw amino-acid sequence, 161 residues long: Large ribosomal subunit protein bL17 (161 aa).

The span at 132–144 (ARAKRAEDNRKAL) shows a compositional bias: basic and acidic residues. The segment at 132 to 161 (ARAKRAEDNRKALEAQQAQAEAETTGETKA) is disordered. Residues 145–161 (EAQQAQAEAETTGETKA) are compositionally biased toward low complexity.

This sequence belongs to the bacterial ribosomal protein bL17 family. In terms of assembly, part of the 50S ribosomal subunit. Contacts protein L32.

This Koribacter versatilis (strain Ellin345) protein is Large ribosomal subunit protein bL17.